The sequence spans 82 residues: Small ribosomal subunit protein uS17c (82 aa).

The protein belongs to the universal ribosomal protein uS17 family. In terms of assembly, part of the 30S ribosomal subunit.

Its subcellular location is the plastid. The protein resides in the chloroplast. Its function is as follows. One of the primary rRNA binding proteins, it binds specifically to the 5'-end of 16S ribosomal RNA. In Emiliania huxleyi (Coccolithophore), this protein is Small ribosomal subunit protein uS17c (rps17).